Consider the following 298-residue polypeptide: ATP phosphoribosyltransferase (298 aa).

It belongs to the ATP phosphoribosyltransferase family. Long subfamily. Mg(2+) is required as a cofactor.

Its subcellular location is the cytoplasm. It catalyses the reaction 1-(5-phospho-beta-D-ribosyl)-ATP + diphosphate = 5-phospho-alpha-D-ribose 1-diphosphate + ATP. Its pathway is amino-acid biosynthesis; L-histidine biosynthesis; L-histidine from 5-phospho-alpha-D-ribose 1-diphosphate: step 1/9. Feedback inhibited by histidine. Its function is as follows. Catalyzes the condensation of ATP and 5-phosphoribose 1-diphosphate to form N'-(5'-phosphoribosyl)-ATP (PR-ATP). Has a crucial role in the pathway because the rate of histidine biosynthesis seems to be controlled primarily by regulation of HisG enzymatic activity. This chain is ATP phosphoribosyltransferase, found in Aliivibrio fischeri (strain MJ11) (Vibrio fischeri).